Reading from the N-terminus, the 420-residue chain is Subtilisin (420 aa).

An N-terminal signal peptide occupies residues 1-31 (MKRSGKIFTTAMLAVTLMMPAMGVSANEGNA). The propeptide occupies 32–111 (AAEGNEKFRV…DKPEALYNAM (80 aa)). Glutamine 115 contacts Ca(2+). The 303-residue stretch at 118–420 (PWGIKAIYNN…ASGFGFATVQ (303 aa)) folds into the Peptidase S8 domain. Aspartate 145 acts as the Charge relay system in catalysis. Position 154 (aspartate 154) interacts with Ca(2+). Residues histidine 182 and serine 360 each act as charge relay system in the active site.

It belongs to the peptidase S8 family. It depends on Ca(2+) as a cofactor.

The protein resides in the secreted. It carries out the reaction Hydrolysis of proteins with broad specificity for peptide bonds, and a preference for a large uncharged residue in P1. Hydrolyzes peptide amides.. Functionally, subtilisin is an extracellular alkaline serine protease, it catalyzes the hydrolysis of proteins and peptide amides. The chain is Subtilisin (sub1) from Bacillus sp. (strain TA39).